The primary structure comprises 662 residues: MGLYRIRVSTGASLYAGSNNQVQLWLVGQHGEAALGKRLWPARGKETELKVEVPEYLGPLLFVKLRKRHLLKDDAWFCNWISVQGPGAGDEVRFPCYRWVEGNGVLSLPEGTGRTVGEDPQGLFQKHREEELEERRKLYRWGNWKDGLILNMAGAKLYDLPVDERFLEDKRVDFEVSLAKGLADLAIKDSLNVLTCWKDLDDFNRIFWCGQSKLAERVRDSWKEDALFGYQFLNGANPVVLRRSAHLPARLVFPPGMEELQAQLEKELEGGTLFEADFSLLDGIKANVILCSQQHLAAPLVMLKLQPDGKLLPMVIQLQLPRTGSPPPPLFLPTDPPMAWLLAKCWVRSSDFQLHELQSHLLRGHLMAEVIVVATMRCLPSIHPIFKLIIPHLRYTLEINVRARTGLVSDMGIFDQIMSTGGGGHVQLLKQAGAFLTYSSFCPPDDLADRGLLGVKSSFYAQDALRLWEIIYRYVEGIVSLHYKTDVAVKDDPELQTWCREITEIGLQGAQDRGFPVSLQARDQVCHFVTMCIFTCTGQHASVHLGQLDWYSWVPNAPCTMRLPPPTTKDATLETVMATLPNFHQASLQMSITWQLGRRQPVMVAVGQHEEEYFSGPEPKAVLKKFREELAALDKEIEIRNAKLDMPYEYLRPSVVENSVAI.

Residues 2–114 (GLYRIRVSTG…VLSLPEGTGR (113 aa)) form the PLAT domain. In terms of domain architecture, Lipoxygenase spans 115-662 (TVGEDPQGLF…PSVVENSVAI (548 aa)). His360, His365, His540, His544, and Ile662 together coordinate Fe cation.

The protein belongs to the lipoxygenase family. In terms of assembly, interacts with PEBP1; in response to IL13/interleukin-13, prevents the interaction of PEBP1 with RAF1 to activate the ERK signaling cascade. Requires Fe cation as cofactor. As to expression, detected in monocytes and eosinophils (at protein level). Expressed in airway epithelial cells.

It localises to the cytoplasm. Its subcellular location is the cytosol. The protein resides in the cell membrane. It is found in the lipid droplet. It carries out the reaction (5Z,8Z,11Z,14Z)-eicosatetraenoate + O2 = (12S)-hydroperoxy-(5Z,8Z,10E,14Z)-eicosatetraenoate. It catalyses the reaction (5Z,8Z,11Z,14Z)-eicosatetraenoate + O2 = (15S)-hydroperoxy-(5Z,8Z,11Z,13E)-eicosatetraenoate. The catalysed reaction is (9Z,12Z)-octadecadienoate + O2 = (13S)-hydroperoxy-(9Z,11E)-octadecadienoate. The enzyme catalyses (5Z,8Z,11Z,14Z)-eicosatetraenoate + 2 O2 = (14R,15S)-dihydroperoxy-(5Z,8Z,10E,12E)-eicosatetraenoate. It carries out the reaction (5Z,8Z,11Z,14Z)-eicosatetraenoate + 2 O2 = (8S,15S)-dihydroperoxy-(5Z,9E,11Z,13E)-eicosatetraenoate. It catalyses the reaction (14S,15R)-epoxy-(5Z,8Z,11Z)-eicosatrienoate + O2 = (8S)-hydroperoxy-(14S,15R)-epoxy-(5Z,9E,11Z)-eicosatrienoate. The catalysed reaction is (14S,15R)-epoxy-(5Z,8Z,11Z)-eicosatrienoate + O2 = (12S)-hydroperoxy-(14S,15R)-epoxy-(5Z,8Z,10E)-eicosatrienoate. The enzyme catalyses (14R,15S)-epoxy-(5Z,8Z,11Z)-eicosatrienoate + O2 = (5S)-hydroperoxy-(14R,15S)-epoxy-(6E,8Z,11Z)-eicosatrienoate. It carries out the reaction (14R,15S)-epoxy-(5Z,8Z,11Z)-eicosatrienoate + O2 = (12S)-hydroperoxy-(14R,15S)-epoxy-(5Z,8Z,10E)-eicosatrienoate. It catalyses the reaction (15R)-hydroperoxy-(5Z,8Z,11Z,13E)-eicosatetraenoate = 15-oxo-(5Z,8Z,11Z,13E)-eicosatetraenoate + H2O. The catalysed reaction is (15S)-hydroperoxy-(5Z,8Z,11Z,13E)-eicosatetraenoate = (14S,15S)-epoxy-(5Z,8Z,10E,12E)-eicosatetraenoate + H2O. The enzyme catalyses (12S)-hydroperoxy-(5Z,8Z,10E,14Z)-eicosatetraenoate = (8S)-hydroxy-(11S,12S)-epoxy-(5Z,9E,14Z)-eicosatrienoate. It carries out the reaction (4Z,7Z,10Z,13Z,16Z,19Z)-docosahexaenoate + O2 = (14S)-hydroperoxy-(4Z,7Z,10Z,12E,16Z,19Z)-docosahexaenoate. It catalyses the reaction (4Z,7Z,10Z,13Z,16Z,19Z)-docosahexaenoate + O2 = (17S)-hydroperoxy-(4Z,7Z,10Z,13Z,15E,19Z)-docosahexaenoate. The catalysed reaction is (7S)-hydroperoxy-(4Z,8E,10Z,13Z,16Z,19Z)-docosahexaenoate + O2 = (7S,14S)-dihydroperoxy-(4Z,8E,10Z,12E,16Z,19Z)-docosahexaenoate. The enzyme catalyses (7S)-hydroperoxy-(4Z,8E,10Z,13Z,16Z,19Z)-docosahexaenoate + O2 = (7S,17S)-dihydroperoxy-(4Z,8E,10Z,13Z,15E,19Z)-docosahexaenoate. It carries out the reaction (4Z,7Z,10Z,13Z,16Z,19Z)-docosahexaenoate + O2 = (11S)-hydroperoxy-(4Z,7Z,9E,13Z,16Z,19Z)-docosahexaenoate. It catalyses the reaction (7Z,10Z,13Z,16Z,19Z)-docosapentaenoate + O2 = 14-hydroperoxy-(7Z,10Z,12E,16Z,19Z)-docosapentaenoate. The catalysed reaction is (4Z,7Z,10Z,13Z,16Z)-docosapentaenoate + O2 = 14-hydroperoxy-(4Z,7Z,10Z,12E,16Z)-docosapentaenoate. The enzyme catalyses N-(5Z,8Z,11Z,14Z)-eicosatetraenoyl-taurine + O2 = N-(12S)-hydroperoxy-(5Z,8Z,10E,14Z)-eicosatetraenoyl-taurine. It carries out the reaction N-(5Z,8Z,11Z,14Z)-eicosatetraenoyl-gamma-aminobutanoate + O2 = N-(12S)-hydroperoxy-(5Z,8Z,10E,14Z)-eicosatetraenoyl-gamma-aminobutanoate. It catalyses the reaction N-(5Z,8Z,11Z,14Z)-eicosatetraenoyl-glycine + O2 = N-(12S)-hydroperoxy-(5Z,8Z,10E,14Z)-eicosatetraenoyl-glycine. The catalysed reaction is N-(5Z,8Z,11Z,14Z)-eicosatetraenoyl-L-alanine + O2 = N-(12S)-hydroperoxy-(5Z,8Z,10E,14Z)-eicosatetraenoyl-alanine. The enzyme catalyses N-(5Z,8Z,11Z,14Z)-eicosatetraenoyl-taurine + O2 = N-(15S)-hydroperoxy-(5Z,8Z,11Z,13E)-eicosatetraenoyl-taurine. It carries out the reaction N-(5Z,8Z,11Z,14Z)-eicosatetraenoyl-gamma-aminobutanoate + O2 = N-(15S)-hydroperoxy-(5Z,8Z,11Z,13E)-eicosatetraenoyl-gamma-aminobutanoate. It catalyses the reaction N-(5Z,8Z,11Z,14Z)-eicosatetraenoyl-glycine + O2 = N-(15S)-hydroperoxy-(5Z,8Z,11Z,13E)-eicosatetraenoyl-glycine. The catalysed reaction is N-(5Z,8Z,11Z,14Z)-eicosatetraenoyl-L-alanine + O2 = N-(15S)-hydroperoxy-(5Z,8Z,11Z,13E)-eicosatetraenoyl-alanine. Its pathway is lipid metabolism; hydroperoxy eicosatetraenoic acid biosynthesis. With respect to regulation, activity is increased by binding phosphatidylinositol phosphates, especially phosphatidylinositol 3,4-bisphosphate and phosphatidylinositol 4,5-bisphosphate. Inactivated at 37 degrees Celsius by (13S)-hydroperoxy-(9Z,11E)-octadecadienoate. Non-heme iron-containing dioxygenase that catalyzes the stereo-specific peroxidation of free and esterified polyunsaturated fatty acids generating a spectrum of bioactive lipid mediators. It inserts peroxyl groups at C12 or C15 of arachidonate ((5Z,8Z,11Z,14Z)-eicosatetraenoate) producing both 12-hydroperoxyeicosatetraenoate/12-HPETE and 15-hydroperoxyeicosatetraenoate/15-HPETE. It may then act on 12-HPETE to produce hepoxilins, which may show pro-inflammatory properties. Can also peroxidize linoleate ((9Z,12Z)-octadecadienoate) to 13-hydroperoxyoctadecadienoate/13-HPODE. May participate in the sequential oxidations of DHA ((4Z,7Z,10Z,13Z,16Z,19Z)-docosahexaenoate) to generate specialized pro-resolving mediators (SPMs)like resolvin D5 ((7S,17S)-diHPDHA) and (7S,14S)-diHPDHA, that actively down-regulate the immune response and have anti-aggregation properties with platelets. Can convert epoxy fatty acids to hydroperoxy-epoxides derivatives followed by an intramolecular nucleophilic substitution leading to the formation of monocyclic endoperoxides. Plays an important role during the maintenance of self-tolerance by peroxidizing membrane-bound phosphatidylethanolamine which can then signal the sorting process for clearance of apoptotic cells during inflammation and prevent an autoimmune response. In addition to its role in the immune and inflammatory responses, this enzyme may play a role in epithelial wound healing in the cornea through production of lipoxin A4 (LXA(4)) and docosahexaenoic acid-derived neuroprotectin D1 (NPD1; 10R,17S-HDHA), both lipid autacoids exhibit anti-inflammatory and neuroprotective properties. Furthermore, it may regulate actin polymerization which is crucial for several biological processes such as the phagocytosis of apoptotic cells. It is also implicated in the generation of endogenous ligands for peroxisome proliferator activated receptor (PPAR-gamma), hence modulating macrophage development and function. It may also exert a negative effect on skeletal development by regulating bone mass through this pathway. As well as participates in ER stress and downstream inflammation in adipocytes, pancreatic islets, and liver. Finally, it is also involved in the cellular response to IL13/interleukin-13. The chain is Polyunsaturated fatty acid lipoxygenase ALOX15 from Homo sapiens (Human).